The sequence spans 538 residues: Nectin-2 (538 aa).

Residues Met1–Ala31 form the signal peptide. Positions Gln32–Leu156 constitute an Ig-like V-type domain. At Gln32 to Gly360 the chain is on the extracellular side. 3 disulfide bridges follow: Cys54–Cys140, Cys183–Cys238, and Cys283–Cys329. Asn137 carries N-linked (GlcNAc...) asparagine glycosylation. Ig-like C2-type domains are found at residues Pro162–Ser256 and Pro261–Phe345. A glycan (N-linked (GlcNAc...) asparagine) is linked at Asn324. A helical membrane pass occupies residues Ile361 to Ile381. The Cytoplasmic portion of the chain corresponds to Cys382–Val538. Residues Thr390–Lys414 are disordered. Phosphothreonine is present on Thr410. A phosphoserine mark is found at Ser433, Gly465, and Gly470. The tract at residues Glu462–Asp489 is disordered.

It belongs to the nectin family. As to quaternary structure, can form trans-heterodimers with NECTIN3. Interacts with CD226 or with PVRIG; these interactions are competitive and have a differential functional outcome on T-cell activation, either positive or negative, respectively. Binds with low affinity to TIGIT. In terms of assembly, (Microbial infection) Interacts with herpes simplex virus 1 (HHV-1) mutant Rid1, herpes simplex virus 1 (HHV-2) and pseudorabies virus (PRV) envelope glycoprotein D. As to expression, ubiquitous.

The protein resides in the cell membrane. Modulator of T-cell signaling. Can be either a costimulator of T-cell function, or a coinhibitor, depending on the receptor it binds to. Upon binding to CD226, stimulates T-cell proliferation and cytokine production, including that of IL2, IL5, IL10, IL13, and IFNG. Upon interaction with PVRIG, inhibits T-cell proliferation. These interactions are competitive. Probable cell adhesion protein. Its function is as follows. (Microbial infection) Acts as a receptor for herpes simplex virus 1 (HHV-1) mutant Rid1, herpes simplex virus 1 (HHV-2) and pseudorabies virus (PRV). The sequence is that of Nectin-2 from Homo sapiens (Human).